Consider the following 303-residue polypeptide: Acetaldehyde dehydrogenase (303 aa).

Cysteine 131 functions as the Acyl-thioester intermediate in the catalytic mechanism. NAD(+) is bound by residues 162-170 (SVGPGTRAN) and asparagine 273.

Belongs to the acetaldehyde dehydrogenase family.

The enzyme catalyses acetaldehyde + NAD(+) + CoA = acetyl-CoA + NADH + H(+). In Marinomonas sp. (strain MWYL1), this protein is Acetaldehyde dehydrogenase.